Consider the following 92-residue polypeptide: C-C motif chemokine 4 (92 aa).

An N-terminal signal peptide occupies residues 1 to 23 (MKLCVTVLSLLVLVAAFCSPALS). 2 disulfides stabilise this stretch: C34–C58 and C35–C74.

It belongs to the intercrine beta (chemokine CC) family. In terms of assembly, homodimer. Interacts with CCR5.

It is found in the secreted. In terms of biological role, monokine with inflammatory and chemokinetic properties. This is C-C motif chemokine 4 (CCL4) from Canis lupus familiaris (Dog).